The primary structure comprises 520 residues: Pleckstrin homology domain-containing family O member 1-A (520 aa).

Disordered regions lie at residues 1–23 (MKKS…QPDK), 208–296 (SLDK…GHLQ), 313–439 (IQEQ…KSTD), and 497–520 (QARQ…QKSP). One can recognise a PH domain in the interval 20–131 (QPDKVGWIRR…WINVLNTAIT (112 aa)). Residues 227–241 (PASNTEAQEKTSSLP) show a composition bias toward polar residues. Composition is skewed to basic and acidic residues over residues 242 to 255 (RKSE…DHPR) and 333 to 347 (DSPR…DSPH). Low complexity predominate over residues 348–361 (SKGSSSPHSANSPS). Composition is skewed to basic and acidic residues over residues 363-385 (RAKD…DSPR) and 396-418 (KSID…DLTH). A compositionally biased stretch (polar residues) spans 420-439 (KGSQSPLSTGSNSPHMKSTD). The span at 497-506 (QARQRREELS) shows a compositional bias: basic and acidic residues. Positions 509 to 520 (GMASQKLQQKSP) are enriched in polar residues.

Post-translationally, C-terminal fragments could be released during apoptosis via caspase-3-dependent cleavage.

It localises to the membrane. The protein localises to the nucleus. The protein resides in the cytoplasm. Plays a role in the regulation of the actin cytoskeleton through its interactions with actin capping protein (CP). The sequence is that of Pleckstrin homology domain-containing family O member 1-A (plekho1a) from Danio rerio (Zebrafish).